A 210-amino-acid polypeptide reads, in one-letter code: 3-hexulose-6-phosphate synthase (210 aa).

Belongs to the HPS/KGPDC family. HPS subfamily.

The catalysed reaction is D-ribulose 5-phosphate + formaldehyde = D-arabino-hex-3-ulose 6-phosphate. The protein operates within one-carbon metabolism; formaldehyde assimilation via RuMP pathway; D-fructose 6-phosphate from D-ribulose 5-phosphate and formaldehyde: step 1/2. Its function is as follows. Catalyzes the condensation of ribulose 5-phosphate with formaldehyde to form 3-hexulose 6-phosphate. The sequence is that of 3-hexulose-6-phosphate synthase from Staphylococcus epidermidis (strain ATCC 12228 / FDA PCI 1200).